Reading from the N-terminus, the 421-residue chain is Adenosylhomocysteinase (421 aa).

2 residues coordinate substrate: D128 and E153. 154–156 (TTT) contributes to the NAD(+) binding site. Residues K183 and D187 each coordinate substrate. NAD(+) is bound by residues N188, 217–222 (GYGWCG), E240, 296–298 (AGH), and N343.

This sequence belongs to the adenosylhomocysteinase family. NAD(+) is required as a cofactor.

The protein resides in the cytoplasm. The catalysed reaction is S-adenosyl-L-homocysteine + H2O = L-homocysteine + adenosine. It functions in the pathway amino-acid biosynthesis; L-homocysteine biosynthesis; L-homocysteine from S-adenosyl-L-homocysteine: step 1/1. May play a key role in the regulation of the intracellular concentration of adenosylhomocysteine. The protein is Adenosylhomocysteinase of Thermococcus kodakarensis (strain ATCC BAA-918 / JCM 12380 / KOD1) (Pyrococcus kodakaraensis (strain KOD1)).